A 406-amino-acid polypeptide reads, in one-letter code: DNA primase large subunit PriL (406 aa).

Cysteine 302, cysteine 375, cysteine 384, and cysteine 389 together coordinate [4Fe-4S] cluster.

It belongs to the eukaryotic-type primase large subunit family. Heterodimer of a small subunit (PriS) and a large subunit (PriL). It depends on [4Fe-4S] cluster as a cofactor.

In terms of biological role, regulatory subunit of DNA primase, an RNA polymerase that catalyzes the synthesis of short RNA molecules used as primers for DNA polymerase during DNA replication. Stabilizes and modulates the activity of the small subunit, increasing the rate of DNA synthesis, and conferring RNA synthesis capability. The DNA polymerase activity may enable DNA primase to also catalyze primer extension after primer synthesis. May also play a role in DNA repair. This is DNA primase large subunit PriL from Methanopyrus kandleri (strain AV19 / DSM 6324 / JCM 9639 / NBRC 100938).